A 489-amino-acid polypeptide reads, in one-letter code: Cytochrome P450 2C3 (489 aa).

Cys434 provides a ligand contact to heme.

Belongs to the cytochrome P450 family. Heme is required as a cofactor.

Its subcellular location is the endoplasmic reticulum membrane. It is found in the microsome membrane. The enzyme catalyses an organic molecule + reduced [NADPH--hemoprotein reductase] + O2 = an alcohol + oxidized [NADPH--hemoprotein reductase] + H2O + H(+). Cytochromes P450 are a group of heme-thiolate monooxygenases. In liver microsomes, this enzyme is involved in an NADPH-dependent electron transport pathway. It oxidizes a variety of structurally unrelated compounds, including steroids, fatty acids, and xenobiotics. The protein is Cytochrome P450 2C3 (CYP2C3) of Oryctolagus cuniculus (Rabbit).